Reading from the N-terminus, the 177-residue chain is Large ribosomal subunit protein uL6 (177 aa).

The protein belongs to the universal ribosomal protein uL6 family. In terms of assembly, part of the 50S ribosomal subunit.

Its function is as follows. This protein binds to the 23S rRNA, and is important in its secondary structure. It is located near the subunit interface in the base of the L7/L12 stalk, and near the tRNA binding site of the peptidyltransferase center. The polypeptide is Large ribosomal subunit protein uL6 (Bartonella bacilliformis (strain ATCC 35685 / KC583 / Herrer 020/F12,63)).